The sequence spans 57 residues: Benzylsuccinate synthase gamma subunit (57 aa).

Heterohexamer composed of 2 alpha subunits, 2 beta subunits and 2 gamma subunits.

The catalysed reaction is toluene + fumarate = 2-benzylsuccinate. Its pathway is xenobiotic degradation; toluene degradation. Activated by the benzylsuccinate synthase activating enzyme BssD. Rapidly inactivated by oxygen. Functionally, catalyzes the addition of fumarate to the methyl group of toluene, leading to the formation of benzylsuccinate. In Thauera aromatica, this protein is Benzylsuccinate synthase gamma subunit (bssC).